Consider the following 413-residue polypeptide: Alpha-1-antitrypsin-like protein CM55-ST (413 aa).

A signal peptide spans 1–24 (MPSSISWGLLLLAALSCLGPGSLA). Gln-25 carries the post-translational modification Pyrrolidone carboxylic acid. Residues Asn-65, Asn-102, Asn-165, and Asn-266 are each glycosylated (N-linked (GlcNAc...) asparagine). The tract at residues 368-387 (GGTVLGNIRSTLRYEVIFDR) is RCL.

It belongs to the serpin family. In terms of tissue distribution, expressed in liver.

The sequence is that of Alpha-1-antitrypsin-like protein CM55-ST from Tamias sibiricus (Siberian chipmunk).